Consider the following 356-residue polypeptide: Glucose 1-dehydrogenase 2 (356 aa).

Residue aspartate 38 participates in Zn(2+) binding. Substrate is bound at residue serine 40. Histidine 64 and glutamate 65 together coordinate Zn(2+). The substrate site is built by glutamate 114 and glutamate 150. A Zn(2+)-binding site is contributed by glutamate 150. NADP(+) contacts are provided by residues 181-184 (NGNL), 206-207 (RR), and 301-303 (VVN). Asparagine 303 serves as a coordination point for substrate.

It belongs to the zinc-containing alcohol dehydrogenase family. Glucose 1-dehydrogenase subfamily. Requires Zn(2+) as cofactor.

It catalyses the reaction D-glucose + NAD(+) = D-glucono-1,5-lactone + NADH + H(+). The catalysed reaction is D-glucose + NADP(+) = D-glucono-1,5-lactone + NADPH + H(+). Functionally, catalyzes the NAD(P)(+)-dependent oxidation of D-glucose to D-gluconate via gluconolactone. Can utilize both NAD(+) and NADP(+) as electron acceptor. Is involved in the degradation of glucose through a modified Entner-Doudoroff pathway. The chain is Glucose 1-dehydrogenase 2 from Haloterrigena turkmenica (strain ATCC 51198 / DSM 5511 / JCM 9101 / NCIMB 13204 / VKM B-1734 / 4k) (Halococcus turkmenicus).